Consider the following 491-residue polypeptide: Synaptotagmin-9 (491 aa).

Residues 1–52 are Vesicular-facing; it reads MPGARDALCHQALQLLAELCARGALEHDSCQDFIYHLRDRARPRLRDPDISV. Positions 9–31 are cysteine motif; sequence CHQALQLLAELCARGALEHDSCQ. The chain crosses the membrane as a helical span at residues 53 to 73; sequence SLLTLVVTACGLALFGVSLFV. The Cytoplasmic segment spans residues 74–491; that stretch reads SWKLCWVPWR…AHWHSLMEKR (418 aa). The segment covering 91 to 104 has biased composition (polar residues); the sequence is SKDNNQEPLNYTDT. The segment at 91-147 is disordered; it reads SKDNNQEPLNYTDTETNEQENSEDFLDPPTPCPDSSMKISHTSPDIPLSTQPGGQEN. Residues 105–116 show a composition bias toward acidic residues; it reads ETNEQENSEDFL. The segment covering 127–144 has biased composition (polar residues); that stretch reads MKISHTSPDIPLSTQPGG. At Ser177 the chain carries Phosphoserine. C2 domains follow at residues 220 to 341 and 352 to 485; these read ACGK…ILWK and DLGE…AHWH. 11 residues coordinate Ca(2+): Asp251, Asp257, Asp309, Phe310, Asp311, Ser314, Asp317, Asp383, Asp389, Asp443, and Asp445.

The protein belongs to the synaptotagmin family. In terms of assembly, homodimer; disulfide-linked via the cysteine motif. Can also form heterodimers with SYT3, SYT6, SYT7 and SYT10. Interacts with DNAJC5 and SNAP25, but not with HSC70. The interaction with DNAJC5 is stimulated tenfold in presence of calcium while the interaction with SNAP25 is inhibited. It depends on Ca(2+) as a cofactor.

The protein resides in the cytoplasmic vesicle. The protein localises to the secretory vesicle. It localises to the synaptic vesicle membrane. Its function is as follows. May be involved in Ca(2+)-dependent exocytosis of secretory vesicles through Ca(2+) and phospholipid binding to the C2 domain or may serve as Ca(2+) sensors in the process of vesicular trafficking and exocytosis. This Mus musculus (Mouse) protein is Synaptotagmin-9 (Syt9).